The chain runs to 591 residues: N-acetylgalactosaminyltransferase 7 (591 aa).

The Cytoplasmic segment spans residues 1-11; sequence MRVSTIRSGRI. A helical; Signal-anchor for type II membrane protein membrane pass occupies residues 12 to 29; sequence CRLALCLLVLLPLLYLLA. A glycan (N-linked (GlcNAc...) asparagine) is linked at Asn30. The Lumenal segment spans residues 30 to 591; the sequence is NWSDHHKRVQ…WWFKEIRPRW (562 aa). The segment at 68–100 is disordered; it reads DGLGNFEPKDVKPRSGPGENGEAHSLSPDKKHM. Cystine bridges form between Cys132–Cys367, Cys358–Cys441, Cys479–Cys496, Cys519–Cys532, and Cys558–Cys573. A catalytic subdomain A region spans residues 141–251; that stretch reads LPRTSVIIVF…TNWLPPLLAP (111 aa). Substrate is bound by residues Asp182 and Arg212. Mn(2+) contacts are provided by Asp235 and His237. The tract at residues 313–375 is catalytic subdomain B; the sequence is PYRSPTHAGG…PCSRVGHVYR (63 aa). Trp344 provides a ligand contact to substrate. Mn(2+) is bound at residue His372. Substrate contacts are provided by Arg375 and Tyr380. The 120-residue stretch at 466–585 folds into the Ricin B-type lectin domain; sequence LHWGELRSVA…NDSYQQWWFK (120 aa). N-linked (GlcNAc...) asparagine glycosylation is present at Asn576.

It belongs to the glycosyltransferase 2 family. GalNAc-T subfamily. It depends on Mn(2+) as a cofactor. As to expression, expressed in developing oocytes and egg chambers. During embryonic stages 9-11, expressed in the primordium of the foregut, midgut and hindgut. Expressed in the salivary glands from embryonic stage 12 onwards. During embryonic stages 12-13, expressed in the posterior midgut and hindgut. During embryonic stages 14-15, expression continues in the hindgut. During embryonic stages 16-17, expressed in the antennomaxillary complex. In third instar larvae, ubiquitously expressed in wing, with increased expression in the notum and ventral wing pouch, eye-antennal, leg and haltere imaginal disks.

The protein resides in the golgi apparatus membrane. The catalysed reaction is L-seryl-[protein] + UDP-N-acetyl-alpha-D-galactosamine = a 3-O-[N-acetyl-alpha-D-galactosaminyl]-L-seryl-[protein] + UDP + H(+). It carries out the reaction L-threonyl-[protein] + UDP-N-acetyl-alpha-D-galactosamine = a 3-O-[N-acetyl-alpha-D-galactosaminyl]-L-threonyl-[protein] + UDP + H(+). It participates in protein modification; protein glycosylation. Glycopeptide transferase involved in O-linked oligosaccharide biosynthesis, which catalyzes the transfer of an N-acetyl-D-galactosamine residue to an already glycosylated peptide. In contrast to other proteins of the family, it does not act as a peptide transferase that transfers GalNAc onto serine or threonine residue on the protein receptor, but instead requires the prior addition of a GalNAc on a peptide before adding additional GalNAc moieties. Some peptide transferase activity is however not excluded, considering that its appropriate peptide substrate may remain unidentified. Prefers the monoglycosylated Muc5AC-3 as substrate. Might have a role in protein O-glycosylation in the Golgi and thereby in establishing and/or maintaining a proper secretory apparatus structure. This Drosophila melanogaster (Fruit fly) protein is N-acetylgalactosaminyltransferase 7.